The sequence spans 348 residues: Phosphoribosylformylglycinamidine cyclo-ligase (348 aa).

It belongs to the AIR synthase family.

It is found in the cytoplasm. The catalysed reaction is 2-formamido-N(1)-(5-O-phospho-beta-D-ribosyl)acetamidine + ATP = 5-amino-1-(5-phospho-beta-D-ribosyl)imidazole + ADP + phosphate + H(+). Its pathway is purine metabolism; IMP biosynthesis via de novo pathway; 5-amino-1-(5-phospho-D-ribosyl)imidazole from N(2)-formyl-N(1)-(5-phospho-D-ribosyl)glycinamide: step 2/2. The polypeptide is Phosphoribosylformylglycinamidine cyclo-ligase (Cereibacter sphaeroides (strain ATCC 17025 / ATH 2.4.3) (Rhodobacter sphaeroides)).